Consider the following 428-residue polypeptide: Sarcosine reductase complex component B subunit alpha (428 aa).

Cysteine 242 is subject to Pyruvic acid (Cys).

As to quaternary structure, heterotetramer of two alpha and two beta subunits. Component of the sarcosine reductase complex, together with components A and C. PB is substrate specific. Post-translationally, the peptide chain is cleaved into beta and alpha chains, and the alpha chain N-terminal cysteine is deaminated and oxidized to form a reactive pyruvoyl group.

The catalysed reaction is acetyl phosphate + methylamine + [thioredoxin]-disulfide + H2O = sarcosine + [thioredoxin]-dithiol + phosphate + H(+). Its function is as follows. In the first step of sarcosine reductase, the substrate is bound to component PB via a Schiff base intermediate. Then the PB-activated substrate is nucleophilically attacked by the selenol anion of component PA to transform it to a carboxymethylated selenoether and the respective amine. By action of component PC, acetyl phosphate is formed, leaving component PA in its oxidized state. Finally component PA becomes reduced by the thioredoxin system to start a new catalytic cycle of reductive deamination. The protein is Sarcosine reductase complex component B subunit alpha (grdG) of Peptoclostridium acidaminophilum (Eubacterium acidaminophilum).